The chain runs to 270 residues: Phosphatidate cytidylyltransferase (270 aa).

8 helical membrane passes run 17–37 (FVVLCFVSYESLIGLVSAILI), 55–75 (FFYVILLALYPVLYGLVFEEP), 81–101 (ILFITGVVFSLITDKDPSQVF), 104–124 (VAAFSIALIYVTFFLSFFLPI), 129–149 (GAANALLVLTSTWVFDSFAYF), 170–190 (EGVIGGFLGVVIYTFLYRLVV), 193–213 (LLSVNVISFRTFLPFAATVAI), and 248–268 (IDGLLFVAPVSYIVFKILEGV).

The protein belongs to the CDS family.

It is found in the cell membrane. It carries out the reaction a 1,2-diacyl-sn-glycero-3-phosphate + CTP + H(+) = a CDP-1,2-diacyl-sn-glycerol + diphosphate. It participates in phospholipid metabolism; CDP-diacylglycerol biosynthesis; CDP-diacylglycerol from sn-glycerol 3-phosphate: step 3/3. In Thermotoga maritima (strain ATCC 43589 / DSM 3109 / JCM 10099 / NBRC 100826 / MSB8), this protein is Phosphatidate cytidylyltransferase (cdsA).